Reading from the N-terminus, the 193-residue chain is DNA damage-inducible transcript 4-like protein (193 aa).

Belongs to the DDIT4 family. Expressed in heart, skeletal muscle and testis.

The protein resides in the cytoplasm. In terms of biological role, inhibits cell growth by regulating the TOR signaling pathway upstream of the TSC1-TSC2 complex and downstream of AKT1. The chain is DNA damage-inducible transcript 4-like protein (Ddit4l) from Rattus norvegicus (Rat).